We begin with the raw amino-acid sequence, 721 residues long: Polyribonucleotide nucleotidyltransferase (721 aa).

Residues Asp-485 and Asp-491 each coordinate Mg(2+). The region spanning Pro-552–Val-611 is the KH domain. Residues Gly-621–Lys-689 enclose the S1 motif domain. Residues Ser-687–Arg-721 are disordered.

The protein belongs to the polyribonucleotide nucleotidyltransferase family. The cofactor is Mg(2+).

The protein localises to the cytoplasm. The catalysed reaction is RNA(n+1) + phosphate = RNA(n) + a ribonucleoside 5'-diphosphate. Its function is as follows. Involved in mRNA degradation. Catalyzes the phosphorolysis of single-stranded polyribonucleotides processively in the 3'- to 5'-direction. The sequence is that of Polyribonucleotide nucleotidyltransferase from Desulfosudis oleivorans (strain DSM 6200 / JCM 39069 / Hxd3) (Desulfococcus oleovorans).